Consider the following 876-residue polypeptide: Phosphoenolpyruvate carboxylase (876 aa).

Active-site residues include H138 and K543.

This sequence belongs to the PEPCase type 1 family. Mg(2+) serves as cofactor.

The catalysed reaction is oxaloacetate + phosphate = phosphoenolpyruvate + hydrogencarbonate. Functionally, forms oxaloacetate, a four-carbon dicarboxylic acid source for the tricarboxylic acid cycle. This is Phosphoenolpyruvate carboxylase from Pseudomonas fluorescens (strain Pf0-1).